The following is a 442-amino-acid chain: Probable D-serine dehydratase (442 aa).

Position 115 is an N6-(pyridoxal phosphate)lysine (lysine 115).

The protein belongs to the serine/threonine dehydratase family. DsdA subfamily. Requires pyridoxal 5'-phosphate as cofactor.

The catalysed reaction is D-serine = pyruvate + NH4(+). The protein is Probable D-serine dehydratase of Halalkalibacterium halodurans (strain ATCC BAA-125 / DSM 18197 / FERM 7344 / JCM 9153 / C-125) (Bacillus halodurans).